We begin with the raw amino-acid sequence, 89 residues long: Small ribosomal subunit protein uS15 (89 aa).

This sequence belongs to the universal ribosomal protein uS15 family. Part of the 30S ribosomal subunit. Forms a bridge to the 50S subunit in the 70S ribosome, contacting the 23S rRNA.

One of the primary rRNA binding proteins, it binds directly to 16S rRNA where it helps nucleate assembly of the platform of the 30S subunit by binding and bridging several RNA helices of the 16S rRNA. Functionally, forms an intersubunit bridge (bridge B4) with the 23S rRNA of the 50S subunit in the ribosome. In Mycobacterium sp. (strain JLS), this protein is Small ribosomal subunit protein uS15.